The primary structure comprises 406 residues: Propionate kinase (406 aa).

Residues Asn-11 and Lys-18 each contribute to the ATP site. Asn-11 lines the Mg(2+) pocket. Arg-86 provides a ligand contact to substrate. Asp-143 acts as the Proton donor/acceptor in catalysis. ATP contacts are provided by residues His-175, His-203–Gly-207, Asp-278–Arg-280, and Gly-326–Asn-330.

The protein belongs to the acetokinase family. TdcD subfamily. Homodimer. Requires Mg(2+) as cofactor.

The catalysed reaction is propanoate + ATP = propanoyl phosphate + ADP. It participates in amino-acid degradation; L-threonine degradation via propanoate pathway; propanoate from L-threonine: step 4/4. Its function is as follows. Catalyzes the conversion of propionyl phosphate and ADP to propionate and ATP. This chain is Propionate kinase, found in Yersinia enterocolitica serotype O:8 / biotype 1B (strain NCTC 13174 / 8081).